Consider the following 548-residue polypeptide: ATP synthase subunit alpha (548 aa).

ATP is bound at residue 172–179 (GDRKTGKT). The tract at residues 510–548 (QFTTSSGESAAPSEPEAEALAADEVGQETVKVNRPAPKK) is disordered. Positions 514 to 531 (SSGESAAPSEPEAEALAA) are enriched in low complexity.

This sequence belongs to the ATPase alpha/beta chains family. F-type ATPases have 2 components, CF(1) - the catalytic core - and CF(0) - the membrane proton channel. CF(1) has five subunits: alpha(3), beta(3), gamma(1), delta(1), epsilon(1). CF(0) has three main subunits: a(1), b(2) and c(9-12). The alpha and beta chains form an alternating ring which encloses part of the gamma chain. CF(1) is attached to CF(0) by a central stalk formed by the gamma and epsilon chains, while a peripheral stalk is formed by the delta and b chains.

The protein resides in the cell membrane. The catalysed reaction is ATP + H2O + 4 H(+)(in) = ADP + phosphate + 5 H(+)(out). Its function is as follows. Produces ATP from ADP in the presence of a proton gradient across the membrane. The alpha chain is a regulatory subunit. The polypeptide is ATP synthase subunit alpha (Saccharopolyspora erythraea (strain ATCC 11635 / DSM 40517 / JCM 4748 / NBRC 13426 / NCIMB 8594 / NRRL 2338)).